A 276-amino-acid polypeptide reads, in one-letter code: Phosphate import ATP-binding protein PstB (276 aa).

The ABC transporter domain maps to 23–271 (VNNKNIVYDT…PSDQRTEDYI (249 aa)). ATP is bound at residue 62–69 (GPSGCGKS).

Belongs to the ABC transporter superfamily. Phosphate importer (TC 3.A.1.7) family. In terms of assembly, the complex is composed of two ATP-binding proteins (PstB), two transmembrane proteins (PstC and PstA) and a solute-binding protein (PstS).

It localises to the cell membrane. The catalysed reaction is phosphate(out) + ATP + H2O = ADP + 2 phosphate(in) + H(+). Its function is as follows. Part of the ABC transporter complex PstSACB involved in phosphate import. Responsible for energy coupling to the transport system. This chain is Phosphate import ATP-binding protein PstB, found in Oceanobacillus iheyensis (strain DSM 14371 / CIP 107618 / JCM 11309 / KCTC 3954 / HTE831).